The sequence spans 81 residues: Small serum protein 4 (81 aa).

The first 19 residues, 1–19 (MKVFFILIIFSFTLATCQG), serve as a signal peptide directing secretion. 3 disulfide bridges follow: C21-C74, C41-C66, and C64-C73.

This sequence belongs to the beta-microseminoprotein family.

The protein resides in the secreted. Shows an slight inhibitory effect toward the metalloproteinase brevilysin H6, but does not inhibit the metalloproteinases thermolysin, HR1A and HR1B. In Protobothrops flavoviridis (Habu), this protein is Small serum protein 4.